The following is a 368-amino-acid chain: Caffeine synthase 3 (368 aa).

Position 23 (Tyr23) interacts with S-adenosyl-L-homocysteine. Thr30 contributes to the caffeine binding site. Positions 65, 70, 102, 103, 137, and 138 each coordinate S-adenosyl-L-homocysteine. Positions 155, 158, and 159 each coordinate caffeine. A Mg(2+)-binding site is contributed by Asn176. Residue Arg224 coordinates caffeine. Residues Asp262, Phe264, and Asn265 each coordinate Mg(2+). Phe320 is a caffeine binding site.

It belongs to the methyltransferase superfamily. Type-7 methyltransferase family. The cofactor is Mg(2+).

It carries out the reaction theobromine + S-adenosyl-L-methionine = caffeine + S-adenosyl-L-homocysteine + H(+). The enzyme catalyses 7-methylxanthine + S-adenosyl-L-methionine = theobromine + S-adenosyl-L-homocysteine + H(+). It participates in alkaloid biosynthesis. Its function is as follows. Involved in the biosynthesis of caffeine. Catalyzes the conversion of 7-methylxanthine (7mX) to theobromine and of theobromine to caffeine. The polypeptide is Caffeine synthase 3 (Camellia sinensis (Tea plant)).